We begin with the raw amino-acid sequence, 154 residues long: MHIDFHDETNSVSEDYIDLIQRLLDFAAQKEGVTSEAELSVNFVDNKEIQVLNRNYRQKDTPTDVISFAMQESNEDEMEIIGADGPLVLGDIVISVDKAKEQSIEYDHSLERELGFLAVHGFLHLLGYDHMKEEDEKKMFSRQEEILGEFGVER.

Positions 120, 124, and 130 each coordinate Zn(2+).

Belongs to the endoribonuclease YbeY family. Requires Zn(2+) as cofactor.

Its subcellular location is the cytoplasm. In terms of biological role, single strand-specific metallo-endoribonuclease involved in late-stage 70S ribosome quality control and in maturation of the 3' terminus of the 16S rRNA. The polypeptide is Endoribonuclease YbeY (Oceanobacillus iheyensis (strain DSM 14371 / CIP 107618 / JCM 11309 / KCTC 3954 / HTE831)).